Here is a 475-residue protein sequence, read N- to C-terminus: Protein transport protein Sec61 subunit alpha (475 aa).

Residues 1–32 (MGFRFLDIVKPFTSLVPEVGQPDRKIPFREKV) lie on the Cytoplasmic side of the membrane. A helical membrane pass occupies residues 33–53 (LWTAICLFIFLVCSQIPLYGI). Residues 54-75 (RSTDSSDPFYWAKVIMASNRGT) lie on the Lumenal side of the membrane. A helical membrane pass occupies residues 76 to 96 (LMELGISPIVTSGMVMQLLAG). Topologically, residues 97–118 (AKLIEIDQSVKADRDLFSAAQK) are cytoplasmic. The helical transmembrane segment at 119-139 (LFGMLICVGQGVAYIWSGSYG) threads the bilayer. The Lumenal portion of the chain corresponds to 140 to 145 (DPAVLG). The chain crosses the membrane as a helical span at residues 146-166 (FGNCFLIVLQLFFAGIIVMLL). Over 167 to 173 (DELLQKG) the chain is Cytoplasmic. The chain crosses the membrane as a helical span at residues 174–194 (YGIGSGISLFIATNICETIVW). At 195 to 241 (KTFSPTTVSVGKGTEFEGAVIALFHLLLTRNDKVRALKEAFYRQNLP) the chain is on the lumenal side. The chain crosses the membrane as a helical span at residues 242-262 (NITNLLATVLIFMVVIYFQGF). The Cytoplasmic segment spans residues 263 to 289 (RVDLPVKSTRVSGQQGTYPIKLFYTSN). The chain crosses the membrane as a helical span at residues 290 to 310 (IPIILQSALVSNLYFISQLLY). The Lumenal segment spans residues 311-353 (RRFPDNILVNLFGAWRTSEYSQQMIPVSGLTYYISSPNNMSAV). Residues 354-374 (LADPFHALFYITFMLTSCALF) form a helical membrane-spanning segment. At 375–411 (SKVWIEVSGSSARDVAKQLKDQQMTMKGHRDTSVIKE) the chain is on the cytoplasmic side. Residues 412-434 (LNRYIPTAAAFGGLCIGALTVVA) form a helical membrane-spanning segment. The Lumenal segment spans residues 435–440 (DFMGAI). A helical transmembrane segment spans residues 441–461 (GSGTGILLAVTIIYQYFETFV). Residues 462–475 (KEQQELSGGIGGLF) are Cytoplasmic-facing.

Belongs to the SecY/SEC61-alpha family. In terms of assembly, heterotrimeric complex composed of SEC61-alpha, SEC61-beta and SEC61-gamma.

The protein resides in the endoplasmic reticulum membrane. Its function is as follows. Appears to play a crucial role in the insertion of secretory and membrane polypeptides into the ER. It is required for assembly of membrane and secretory proteins. Found to be tightly associated with membrane-bound ribosomes, either directly or through adaptor proteins. In Dictyostelium discoideum (Social amoeba), this protein is Protein transport protein Sec61 subunit alpha (sec61a).